We begin with the raw amino-acid sequence, 202 residues long: Large ribosomal subunit protein uL13 (202 aa).

It belongs to the universal ribosomal protein uL13 family.

In Caenorhabditis elegans, this protein is Large ribosomal subunit protein uL13.